The chain runs to 172 residues: uncharacterized protein (172 aa).

The disordered stretch occupies residues 130–154 (EQEKGAAPQEGKDWQVISEEDKKNQ).

This is an uncharacterized protein from Bacillus subtilis (strain 168).